The chain runs to 101 residues: Urease subunit beta 1 (101 aa).

Belongs to the urease beta subunit family. In terms of assembly, heterotrimer of UreA (gamma), UreB (beta) and UreC (alpha) subunits. Three heterotrimers associate to form the active enzyme.

It is found in the cytoplasm. It catalyses the reaction urea + 2 H2O + H(+) = hydrogencarbonate + 2 NH4(+). Its pathway is nitrogen metabolism; urea degradation; CO(2) and NH(3) from urea (urease route): step 1/1. Disruption of the ure1 gene cluster suggests that it protects brucellae during their passage through the stomach. The major route of infection in human brucellosis is oral. This Brucella abortus (strain 2308) protein is Urease subunit beta 1.